Here is a 381-residue protein sequence, read N- to C-terminus: Curved DNA-binding protein (381 aa).

The residue at position 8 (serine 8) is a Phosphoserine. Residue threonine 362 is modified to Phosphothreonine. The short motif at 368-375 is the Nuclear localization signal element; the sequence is KNKKKSKK.

Belongs to the peptidase M24 family.

The protein resides in the nucleus. Functionally, a non-essential protein that preferentially binds curved DNA. Binds non-curved DNA with a much lower affinity. The protein is Curved DNA-binding protein (cdb4) of Schizosaccharomyces pombe (strain 972 / ATCC 24843) (Fission yeast).